A 576-amino-acid polypeptide reads, in one-letter code: 2-succinyl-5-enolpyruvyl-6-hydroxy-3-cyclohexene-1-carboxylate synthase (576 aa).

Belongs to the TPP enzyme family. MenD subfamily. In terms of assembly, homodimer. Mg(2+) is required as a cofactor. Requires Mn(2+) as cofactor. Thiamine diphosphate serves as cofactor.

The catalysed reaction is isochorismate + 2-oxoglutarate + H(+) = 5-enolpyruvoyl-6-hydroxy-2-succinyl-cyclohex-3-ene-1-carboxylate + CO2. Its pathway is quinol/quinone metabolism; 1,4-dihydroxy-2-naphthoate biosynthesis; 1,4-dihydroxy-2-naphthoate from chorismate: step 2/7. The protein operates within quinol/quinone metabolism; menaquinone biosynthesis. Its function is as follows. Catalyzes the thiamine diphosphate-dependent decarboxylation of 2-oxoglutarate and the subsequent addition of the resulting succinic semialdehyde-thiamine pyrophosphate anion to isochorismate to yield 2-succinyl-5-enolpyruvyl-6-hydroxy-3-cyclohexene-1-carboxylate (SEPHCHC). This chain is 2-succinyl-5-enolpyruvyl-6-hydroxy-3-cyclohexene-1-carboxylate synthase, found in Aliivibrio fischeri (strain ATCC 700601 / ES114) (Vibrio fischeri).